The sequence spans 314 residues: Probable cell division protein WhiA (314 aa).

A DNA-binding region (H-T-H motif) is located at residues Ser-274–Asn-308.

The protein belongs to the WhiA family.

Its function is as follows. Involved in cell division and chromosome segregation. The chain is Probable cell division protein WhiA from Staphylococcus aureus (strain USA300).